The chain runs to 278 residues: HTH-type transcriptional activator RhaS (278 aa).

In terms of domain architecture, HTH araC/xylS-type spans 174 to 272 (NQLLAWLEDH…DWSPRDIRQG (99 aa)). 2 DNA-binding regions (H-T-H motif) span residues 191-212 (ESIA…KQQT) and 239-262 (VTDI…RREF).

As to quaternary structure, binds DNA as a dimer.

It localises to the cytoplasm. In terms of biological role, activates expression of the rhaBAD and rhaT operons. The sequence is that of HTH-type transcriptional activator RhaS from Citrobacter koseri (strain ATCC BAA-895 / CDC 4225-83 / SGSC4696).